Reading from the N-terminus, the 480-residue chain is NADH-quinone oxidoreductase subunit N (480 aa).

The next 13 membrane-spanning stretches (helical) occupy residues 13 to 33, 41 to 61, 81 to 101, 107 to 127, 132 to 152, 167 to 187, 212 to 232, 245 to 265, 276 to 296, 314 to 334, 373 to 393, 413 to 433, and 454 to 474; these read ISPMLILCGVALLSLVVQFLI, PLWVLSILGILVAMYALYHTT, VWLSAIYLIAGLITLLVAPPF, TLFPEFFPLMLFCLSGMMFLT, LIVIFVGLEILSLSLYVMIGM, FLLGTFSSGFMLLGIAFLYGG, LGLGLFFVGVSFKAALVPFHS, ITGFMASAGKASALGLVIILF, VWKYLMGTIALISMTWGNIVA, AGYIVAGIACGAGLEALYYLF, ALALSLVFLSFAGFPPLIGFW, LLFGAVANSCIAFYYYMKITI, and PTLGFLIFLLCVFFTAGWIFF.

It belongs to the complex I subunit 2 family. NDH-1 is composed of 14 different subunits. Subunits NuoA, H, J, K, L, M, N constitute the membrane sector of the complex.

It is found in the cell inner membrane. It carries out the reaction a quinone + NADH + 5 H(+)(in) = a quinol + NAD(+) + 4 H(+)(out). NDH-1 shuttles electrons from NADH, via FMN and iron-sulfur (Fe-S) centers, to quinones in the respiratory chain. The immediate electron acceptor for the enzyme in this species is believed to be ubiquinone. Couples the redox reaction to proton translocation (for every two electrons transferred, four hydrogen ions are translocated across the cytoplasmic membrane), and thus conserves the redox energy in a proton gradient. The protein is NADH-quinone oxidoreductase subunit N of Leptospira biflexa serovar Patoc (strain Patoc 1 / Ames).